A 117-amino-acid polypeptide reads, in one-letter code: uncharacterized protein (117 aa).

This is an uncharacterized protein from Acidianus convivator (ABV).